Here is a 90-residue protein sequence, read N- to C-terminus: NELL2-interacting cell ontogeny regulator 1 (90 aa).

The N-terminal stretch at 1-28 (MAPALRSLLSPRTLLLLLLSLALLGARA) is a signal peptide.

Belongs to the NICOL family. Interacts with NELL2; triggers epididymal differentiation. Interacts with cell surface receptor TFRC; the interaction mediates uptake of NICOL1 into fibroblasts. In terms of tissue distribution, expression is enriched in both male and female reproductive organs, including the testis, epididymis, seminal vesicles, coagulating glands, ovary and uterus, and in various non-reproductive organs such as brain, thymus and liver. In testis, expressed in both germ cells and Sertoli cells. Also expressed at low levels in the kidney. Expressed during neocortex and cerebellum development.

The protein resides in the secreted. It localises to the cytoplasm. The protein localises to the perinuclear region. Functionally, mRNA-binding protein which interacts with a range of target mRNAs including SERPINE1, ACTA2, CCN2 and COL4A1 and may promote extracellular matrix production. Binds to the 3'-UTR of SERPINE1 mRNA and stabilizes the mRNA, possibly by competing for binding with SERBP1 and preventing SERBP1-mediated mRNA degradation. Also binds to the 3'-UTR of ACTA2. Testis-derived lumicrine factor that triggers epididymal differentiation and sperm maturation. This Mus musculus (Mouse) protein is NELL2-interacting cell ontogeny regulator 1.